The chain runs to 213 residues: 3-dehydroquinate dehydratase (213 aa).

3-dehydroquinate is bound by residues Glu-27–Arg-29 and Arg-53. Catalysis depends on His-111, which acts as the Proton donor/acceptor. Lys-138 serves as the catalytic Schiff-base intermediate with substrate. 3-dehydroquinate is bound by residues Arg-175 and Gln-197.

It belongs to the type-I 3-dehydroquinase family. As to quaternary structure, homodimer.

The catalysed reaction is 3-dehydroquinate = 3-dehydroshikimate + H2O. Its pathway is metabolic intermediate biosynthesis; chorismate biosynthesis; chorismate from D-erythrose 4-phosphate and phosphoenolpyruvate: step 3/7. Its function is as follows. Involved in the third step of the chorismate pathway, which leads to the biosynthesis of aromatic amino acids. Catalyzes the cis-dehydration of 3-dehydroquinate (DHQ) and introduces the first double bond of the aromatic ring to yield 3-dehydroshikimate. This is 3-dehydroquinate dehydratase from Thermococcus gammatolerans (strain DSM 15229 / JCM 11827 / EJ3).